The sequence spans 194 residues: uncharacterized protein (194 aa).

This is an uncharacterized protein from Haemophilus influenzae (strain ATCC 51907 / DSM 11121 / KW20 / Rd).